Reading from the N-terminus, the 308-residue chain is Acyl transferase (308 aa).

Residues S116, D213, and H243 each act as charge relay system in the active site.

Belongs to the LuxD family.

It functions in the pathway lipid metabolism; fatty acid reduction for biolumincescence. Its function is as follows. Acyl transferase is part of the fatty acid reductase system required for aldehyde biosynthesis; it produces fatty acids for the luminescent reaction. The sequence is that of Acyl transferase from Shewanella hanedai (Alteromonas hanedai).